The following is a 337-amino-acid chain: MDYRTLHPQIAAAYRVLETGSPISQAEALLLAELPGELVLDLASLANKVKNRYGTGSAGSELLHACSIMNAKSGVCGENCRFCAQSRHNRADIEVYDLVDAESVLIEARNCFAEGVSHFGIVTSGYGYKRINPEFQRVLDMIDRLHEELPELSVCASLGMLGEEPAEALAAHGIAHYNINIQVVPDRYHDLIADTHSVEERIETIKLLRKNNISVCCGGIMGVGETMQERIAMIFALQELDVSVIPLNVLVPIEGTPLAGKEPLSVAEIVKTFAICRLAHPHKIIKFAAGRETIMKDFQGLLMLSGANGFLTGGYLTTRGRDIADDRRFASQIASFN.

Residues 58-288 (AGSELLHACS…AHPHKIIKFA (231 aa)) form the Radical SAM core domain. C76, C80, and C83 together coordinate [4Fe-4S] cluster. Residues C155, C216, and K286 each contribute to the [2Fe-2S] cluster site.

It belongs to the radical SAM superfamily. Biotin synthase family. Homodimer. [4Fe-4S] cluster serves as cofactor. The cofactor is [2Fe-2S] cluster.

The catalysed reaction is (4R,5S)-dethiobiotin + (sulfur carrier)-SH + 2 reduced [2Fe-2S]-[ferredoxin] + 2 S-adenosyl-L-methionine = (sulfur carrier)-H + biotin + 2 5'-deoxyadenosine + 2 L-methionine + 2 oxidized [2Fe-2S]-[ferredoxin]. It participates in cofactor biosynthesis; biotin biosynthesis; biotin from 7,8-diaminononanoate: step 2/2. Functionally, catalyzes the conversion of dethiobiotin (DTB) to biotin by the insertion of a sulfur atom into dethiobiotin via a radical-based mechanism. The polypeptide is Biotin synthase (Pelodictyon phaeoclathratiforme (strain DSM 5477 / BU-1)).